A 158-amino-acid polypeptide reads, in one-letter code: Endoribonuclease YbeY (158 aa).

Zn(2+)-binding residues include H118, H122, and H128.

Belongs to the endoribonuclease YbeY family. Requires Zn(2+) as cofactor.

Its subcellular location is the cytoplasm. In terms of biological role, single strand-specific metallo-endoribonuclease involved in late-stage 70S ribosome quality control and in maturation of the 3' terminus of the 16S rRNA. The sequence is that of Endoribonuclease YbeY from Alteromonas mediterranea (strain DSM 17117 / CIP 110805 / LMG 28347 / Deep ecotype).